The sequence spans 278 residues: Small ribosomal subunit protein uS2 (278 aa).

The disordered stretch occupies residues 235 to 278; that stretch reads QRRKDHGEGGQQAAGGGRGQRDEINVYQGGRGGRGGGPRQQQAS. Composition is skewed to gly residues over residues 243–252 and 263–272; these read GGQQAAGGGR and GGRGGRGGGP.

This sequence belongs to the universal ribosomal protein uS2 family.

This is Small ribosomal subunit protein uS2 from Sorangium cellulosum (strain So ce56) (Polyangium cellulosum (strain So ce56)).